A 78-amino-acid chain; its full sequence is Acyl carrier protein (78 aa).

The Carrier domain occupies 2 to 77; sequence SDTVERVKKI…DAVKFIDKAS (76 aa). Ser37 is subject to O-(pantetheine 4'-phosphoryl)serine.

This sequence belongs to the acyl carrier protein (ACP) family. Post-translationally, 4'-phosphopantetheine is transferred from CoA to a specific serine of apo-ACP by AcpS. This modification is essential for activity because fatty acids are bound in thioester linkage to the sulfhydryl of the prosthetic group.

It is found in the cytoplasm. It functions in the pathway lipid metabolism; fatty acid biosynthesis. Functionally, carrier of the growing fatty acid chain in fatty acid biosynthesis. This is Acyl carrier protein from Bartonella henselae (strain ATCC 49882 / DSM 28221 / CCUG 30454 / Houston 1) (Rochalimaea henselae).